The primary structure comprises 199 residues: 3-isopropylmalate dehydratase small subunit (199 aa).

It belongs to the LeuD family. LeuD type 1 subfamily. Heterodimer of LeuC and LeuD.

The enzyme catalyses (2R,3S)-3-isopropylmalate = (2S)-2-isopropylmalate. It participates in amino-acid biosynthesis; L-leucine biosynthesis; L-leucine from 3-methyl-2-oxobutanoate: step 2/4. Its function is as follows. Catalyzes the isomerization between 2-isopropylmalate and 3-isopropylmalate, via the formation of 2-isopropylmaleate. This is 3-isopropylmalate dehydratase small subunit from Tolumonas auensis (strain DSM 9187 / NBRC 110442 / TA 4).